A 159-amino-acid chain; its full sequence is ATP synthase subunit b' (159 aa).

The chain crosses the membrane as a helical span at residues 27-47 (ATLPLMAVQFLILTVILNALL).

It belongs to the ATPase B chain family. In terms of assembly, F-type ATPases have 2 components, F(1) - the catalytic core - and F(0) - the membrane proton channel. F(1) has five subunits: alpha(3), beta(3), gamma(1), delta(1), epsilon(1). F(0) has four main subunits: a(1), b(1), b'(1) and c(10-14). The alpha and beta chains form an alternating ring which encloses part of the gamma chain. F(1) is attached to F(0) by a central stalk formed by the gamma and epsilon chains, while a peripheral stalk is formed by the delta, b and b' chains.

It localises to the cellular thylakoid membrane. F(1)F(0) ATP synthase produces ATP from ADP in the presence of a proton or sodium gradient. F-type ATPases consist of two structural domains, F(1) containing the extramembraneous catalytic core and F(0) containing the membrane proton channel, linked together by a central stalk and a peripheral stalk. During catalysis, ATP synthesis in the catalytic domain of F(1) is coupled via a rotary mechanism of the central stalk subunits to proton translocation. Its function is as follows. Component of the F(0) channel, it forms part of the peripheral stalk, linking F(1) to F(0). The b'-subunit is a diverged and duplicated form of b found in plants and photosynthetic bacteria. The chain is ATP synthase subunit b' from Synechococcus sp. (strain PCC 6716).